The chain runs to 362 residues: Molybdenum import ATP-binding protein ModC (362 aa).

Positions 2-236 (ASPIEVRLQM…LDLPLAMGSD (235 aa)) constitute an ABC transporter domain. An ATP-binding site is contributed by 34-41 (GPSGSGKT). In terms of domain architecture, Mop spans 297-362 (QSSILNRLPV…AQIKAVAVLA (66 aa)).

This sequence belongs to the ABC transporter superfamily. Molybdate importer (TC 3.A.1.8) family. In terms of assembly, the complex is composed of two ATP-binding proteins (ModC), two transmembrane proteins (ModB) and a solute-binding protein (ModA).

It localises to the cell inner membrane. It catalyses the reaction molybdate(out) + ATP + H2O = molybdate(in) + ADP + phosphate + H(+). Part of the ABC transporter complex ModABC involved in molybdenum import. Responsible for energy coupling to the transport system. The chain is Molybdenum import ATP-binding protein ModC from Pseudomonas syringae pv. syringae (strain B728a).